A 134-amino-acid polypeptide reads, in one-letter code: Large ribosomal subunit protein uL16c (134 aa).

The protein belongs to the universal ribosomal protein uL16 family. As to quaternary structure, part of the 50S ribosomal subunit.

The protein localises to the plastid. It localises to the chloroplast. The sequence is that of Large ribosomal subunit protein uL16c from Oltmannsiellopsis viridis (Marine flagellate).